Here is a 228-residue protein sequence, read N- to C-terminus: 3-oxoadipate CoA-transferase subunit A (228 aa).

25-31 (GGFGTAG) contributes to the CoA binding site.

This sequence belongs to the 3-oxoacid CoA-transferase subunit A family. In terms of assembly, heterodimer.

It catalyses the reaction 3-oxoadipate + succinyl-CoA = 3-oxoadipyl-CoA + succinate. The protein operates within aromatic compound metabolism; beta-ketoadipate pathway; acetyl-CoA and succinyl-CoA from 3-oxoadipate: step 1/2. The sequence is that of 3-oxoadipate CoA-transferase subunit A (pcaI) from Acinetobacter baylyi (strain ATCC 33305 / BD413 / ADP1).